Consider the following 147-residue polypeptide: Hemoglobin subunit beta (147 aa).

A Globin domain is found at 3 to 147 (HWTPEEKQYI…VAHALALGYH (145 aa)). Heme b contacts are provided by His64 and His93.

This sequence belongs to the globin family. In terms of assembly, heterotetramer of two alpha-D chains and two beta chains. In terms of tissue distribution, red blood cells.

Involved in oxygen transport from the lung to the various peripheral tissues. This Chelonoidis niger (Galapagos giant tortoise) protein is Hemoglobin subunit beta (HBB).